Consider the following 161-residue polypeptide: Nucleotide-binding protein BamMC406_2474 (161 aa).

This sequence belongs to the YajQ family.

Its function is as follows. Nucleotide-binding protein. The chain is Nucleotide-binding protein BamMC406_2474 from Burkholderia ambifaria (strain MC40-6).